The primary structure comprises 427 residues: 3-phosphoshikimate 1-carboxyvinyltransferase (427 aa).

3 residues coordinate 3-phosphoshikimate: K22, S23, and R27. A phosphoenolpyruvate-binding site is contributed by K22. The phosphoenolpyruvate site is built by G96 and R124. Positions 169, 170, 171, 197, 313, 336, and 340 each coordinate 3-phosphoshikimate. Q171 lines the phosphoenolpyruvate pocket. D313 acts as the Proton acceptor in catalysis. Residues R344, R386, and K411 each coordinate phosphoenolpyruvate.

This sequence belongs to the EPSP synthase family. In terms of assembly, monomer.

It is found in the cytoplasm. The catalysed reaction is 3-phosphoshikimate + phosphoenolpyruvate = 5-O-(1-carboxyvinyl)-3-phosphoshikimate + phosphate. The protein operates within metabolic intermediate biosynthesis; chorismate biosynthesis; chorismate from D-erythrose 4-phosphate and phosphoenolpyruvate: step 6/7. Its function is as follows. Catalyzes the transfer of the enolpyruvyl moiety of phosphoenolpyruvate (PEP) to the 5-hydroxyl of shikimate-3-phosphate (S3P) to produce enolpyruvyl shikimate-3-phosphate and inorganic phosphate. This is 3-phosphoshikimate 1-carboxyvinyltransferase from Salmonella dublin (strain CT_02021853).